Reading from the N-terminus, the 278-residue chain is Digeranylgeranylglyceryl phosphate synthase (278 aa).

Transmembrane regions (helical) follow at residues 12-32 (LKNCLTASFGAFIGGLIASYF), 34-54 (LATVYDLILASIVVFLVCGFG), 91-111 (LLVFVGLFISLFNMACFLMAV), 129-149 (IIGNLIVAYLTGSVFIFGGIA), 153-173 (IDVTIMLFLCALFAMWSREII), 204-224 (FLLVFAVFLSPLPYLFGFFGI), 225-245 (YYMLSVVFCDLLFLIGIYNLV), and 257-277 (SRNIKIVTNLVLIAFLIGSLF).

Belongs to the UbiA prenyltransferase family. DGGGP synthase subfamily. Mg(2+) serves as cofactor.

The protein localises to the cell membrane. It catalyses the reaction sn-3-O-(geranylgeranyl)glycerol 1-phosphate + (2E,6E,10E)-geranylgeranyl diphosphate = 2,3-bis-O-(geranylgeranyl)-sn-glycerol 1-phosphate + diphosphate. It participates in membrane lipid metabolism; glycerophospholipid metabolism. Its function is as follows. Prenyltransferase that catalyzes the transfer of the geranylgeranyl moiety of geranylgeranyl diphosphate (GGPP) to the C2 hydroxyl of (S)-3-O-geranylgeranylglyceryl phosphate (GGGP). This reaction is the second ether-bond-formation step in the biosynthesis of archaeal membrane lipids. This chain is Digeranylgeranylglyceryl phosphate synthase, found in Methanococcus maripaludis (strain C7 / ATCC BAA-1331).